We begin with the raw amino-acid sequence, 314 residues long: Malate dehydrogenase (314 aa).

Residues 11-16 (GSGNIG) and D35 contribute to the NAD(+) site. Substrate contacts are provided by R84 and R90. NAD(+) is bound by residues N97 and 120–122 (ITN). 2 residues coordinate substrate: N122 and R153. The Proton acceptor role is filled by H177.

Belongs to the LDH/MDH superfamily. MDH type 3 family.

The catalysed reaction is (S)-malate + NAD(+) = oxaloacetate + NADH + H(+). Catalyzes the reversible oxidation of malate to oxaloacetate. This is Malate dehydrogenase from Rickettsia bellii (strain OSU 85-389).